The sequence spans 83 residues: Small ribosomal subunit protein bS16 (83 aa).

Belongs to the bacterial ribosomal protein bS16 family.

The protein is Small ribosomal subunit protein bS16 of Cupriavidus taiwanensis (strain DSM 17343 / BCRC 17206 / CCUG 44338 / CIP 107171 / LMG 19424 / R1) (Ralstonia taiwanensis (strain LMG 19424)).